A 95-amino-acid chain; its full sequence is Protein TusB (95 aa).

It belongs to the DsrH/TusB family. As to quaternary structure, heterohexamer, formed by a dimer of trimers. The hexameric TusBCD complex contains 2 copies each of TusB, TusC and TusD. The TusBCD complex interacts with TusE.

The protein localises to the cytoplasm. Part of a sulfur-relay system required for 2-thiolation of 5-methylaminomethyl-2-thiouridine (mnm(5)s(2)U) at tRNA wobble positions. The polypeptide is Protein TusB (Klebsiella pneumoniae (strain 342)).